The chain runs to 274 residues: Protein FRG1 homolog (274 aa).

The Nuclear localization signal motif lies at 20–36; it reads KKNLFKVGKEKKKKNKD. Residues 27–46 form a disordered region; sequence GKEKKKKNKDDKEKIDPDTV. The segment covering 34–43 has biased composition (basic and acidic residues); it reads NKDDKEKIDP. A Bipartite nuclear localization signal motif is present at residues 252-268; that stretch reads QADGSAHELLLDRRMKM.

The protein belongs to the FRG1 family.

It localises to the nucleus. The protein localises to the cajal body. The protein resides in the nucleolus. Its subcellular location is the cytoplasm. Binds to mRNA in a sequence-independent manner. May play a role in regulation of pre-mRNA splicing or in the assembly of rRNA into ribosomal subunits. May be involved in mRNA transport. May be involved in epigenetic regulation of muscle differentiation through regulation of activity of the histone-lysine N-methyltransferase KMT5B. In Caenorhabditis elegans, this protein is Protein FRG1 homolog (frg-1).